Reading from the N-terminus, the 87-residue chain is Small ribosomal subunit protein bS16 (87 aa).

Belongs to the bacterial ribosomal protein bS16 family.

The sequence is that of Small ribosomal subunit protein bS16 from Aster yellows witches'-broom phytoplasma (strain AYWB).